A 114-amino-acid chain; its full sequence is RNA polymerase-binding protein RbpA (114 aa).

The protein belongs to the RNA polymerase-binding protein RbpA family. In terms of assembly, monomer. Forms a complex with the RNAP catalytic core, specifically with the beta subunit (RpoB); its binding site may overlap with that of Rif. May bind free principal sigma factors.

Functionally, binds to RNA polymerase (RNAP), probably stimulating transcriptions from principal, but not alternative sigma factor promoters. Partially restores transcription in the presence of rifampicin (Rif) in vitro; overexpression leads to an increase in the Rif tolerance in vivo, with smaller colonies. Seems to act by removing Rif from its binding site and preventing its further binding. No longer stimulates transcription in Rif-resistant RNA polymerase (with mutations in rpoB). The polypeptide is RNA polymerase-binding protein RbpA (Mycolicibacterium smegmatis (strain ATCC 700084 / mc(2)155) (Mycobacterium smegmatis)).